Here is a 359-residue protein sequence, read N- to C-terminus: Alanine racemase (359 aa).

The active-site Proton acceptor; specific for D-alanine is the K35. K35 carries the N6-(pyridoxal phosphate)lysine modification. R131 contacts substrate. The active-site Proton acceptor; specific for L-alanine is the Y253. M301 is a substrate binding site.

This sequence belongs to the alanine racemase family. The cofactor is pyridoxal 5'-phosphate.

The enzyme catalyses L-alanine = D-alanine. It participates in amino-acid biosynthesis; D-alanine biosynthesis; D-alanine from L-alanine: step 1/1. Its function is as follows. Catalyzes the interconversion of L-alanine and D-alanine. May also act on other amino acids. The sequence is that of Alanine racemase (alr) from Laribacter hongkongensis (strain HLHK9).